A 433-amino-acid chain; its full sequence is Isocitrate dehydrogenase [NADP], chloroplastic (433 aa).

The N-terminal 21 residues, 1–21 (QFSPNLSFSAFFPIITFTTAT), are a transit peptide targeting the chloroplast. NADP(+)-binding positions include 98 to 100 (TIT) and R105. A substrate-binding site is contributed by T100. Residues 117–123 (SPNGTIR), R132, and R155 contribute to the substrate site. D275 contacts Mn(2+). K283 contributes to the NADP(+) binding site. D298 is a Mn(2+) binding site. Residues 333–338 (GTVTRH) and N351 contribute to the NADP(+) site.

This sequence belongs to the isocitrate and isopropylmalate dehydrogenases family. The cofactor is Mg(2+). It depends on Mn(2+) as a cofactor. Detected in all tissues examined.

Its subcellular location is the plastid. The protein resides in the chloroplast. The catalysed reaction is D-threo-isocitrate + NADP(+) = 2-oxoglutarate + CO2 + NADPH. This chain is Isocitrate dehydrogenase [NADP], chloroplastic, found in Medicago sativa (Alfalfa).